The sequence spans 232 residues: TIR domain-containing adapter molecule 2 (232 aa).

Basic and acidic residues predominate over residues 1–39; it reads MGVGKSKLDKCPLSWHKKDSVDADQDGHESDSKNSEEAC. The segment at 1 to 70 is disordered; it reads MGVGKSKLDK…EAKGAGPEEQ (70 aa). Gly-2 is lipidated: N-myristoyl glycine. The 153-residue stretch at 74–226 folds into the TIR domain; it reads EFLKFVILHA…SIWKETRSVS (153 aa). The residue at position 164 (Tyr-164) is a Phosphotyrosine.

As to quaternary structure, homodimer. Interacts with TLR4, TICAM1, IRF3 and IRF7 in response to LPS. Interacts with IL1R1, IL1RAP, IRAK2, IRAK3 and TRAF6. Interacts with protein kinase-inactive mutants of IRAK1 and IRAK4. Isoform 1 interacts with isoform 2; the interaction occurs in late endosomes and disrupts the interaction between isoform 1 and TICAM1. Interacts with MYD88; the interaction decreases after IL-18 stimulation in a time-dependent manner. Interacts with IL18R1 and IL18RAP. Interacts with TLR2. Interacts with RAB11FIP2. In terms of processing, myristoylated. Required for membrane association which is critical for its ability to initiate efficient signaling. Post-translationally, phosphorylated by PRKCE in response to LPS. Phosphorylation is essential for its function. It is depleted from the membrane upon phosphorylation. Tyrosine phosphorylation is inhibited by phosphatase PTPN4.

The protein resides in the cytoplasm. Its subcellular location is the golgi apparatus. It is found in the cell membrane. The protein localises to the early endosome. It localises to the late endosome. The protein resides in the endoplasmic reticulum. Its subcellular location is the cell projection. It is found in the phagocytic cup. Its function is as follows. Functions as a sorting adapter in different signaling pathways to facilitate downstream signaling leading to type I interferon induction. In TLR4 signaling, physically bridges TLR4 and TICAM1 and functionally transmits signal to TICAM1 in early endosomes after endocytosis of TLR4. In TLR2 signaling, physically bridges TLR2 and MYD88 and is required for the TLR2-dependent movement of MYD88 to endosomes following ligand engagement. Involved in IL-18 signaling and is proposed to function as a sorting adapter for MYD88 in IL-18 signaling during adaptive immune response. Forms a complex with RAB11FIP2 that is recruited to the phagosomes to promote the activation of the actin-regulatory GTPases RAC1 and CDC42 and subsequent phagocytosis of Gram-negative bacteria. This Mus musculus (Mouse) protein is TIR domain-containing adapter molecule 2 (Ticam2).